Consider the following 435-residue polypeptide: 5-methylthioadenosine/S-adenosylhomocysteine deaminase (435 aa).

Residues His65 and His67 each coordinate Zn(2+). Substrate contacts are provided by Glu94, Arg150, and His189. Zn(2+) is bound at residue His216. Glu219 and Asp304 together coordinate substrate. Asp304 is a binding site for Zn(2+).

It belongs to the metallo-dependent hydrolases superfamily. MTA/SAH deaminase family. Requires Zn(2+) as cofactor.

It carries out the reaction S-adenosyl-L-homocysteine + H2O + H(+) = S-inosyl-L-homocysteine + NH4(+). The catalysed reaction is S-methyl-5'-thioadenosine + H2O + H(+) = S-methyl-5'-thioinosine + NH4(+). Catalyzes the deamination of 5-methylthioadenosine and S-adenosyl-L-homocysteine into 5-methylthioinosine and S-inosyl-L-homocysteine, respectively. Is also able to deaminate adenosine. The polypeptide is 5-methylthioadenosine/S-adenosylhomocysteine deaminase (Bacillus cytotoxicus (strain DSM 22905 / CIP 110041 / 391-98 / NVH 391-98)).